We begin with the raw amino-acid sequence, 534 residues long: Endoglucanase 5 (534 aa).

A signal peptide spans 1-27 (MSDVSGRFVVAAAVVAVSLAMAAAAAA). Aspartate 82 functions as the Nucleophile in the catalytic mechanism. Active-site residues include histidine 432, aspartate 484, and glutamate 493. Residues 515-534 (RRRGEDAPPSSTSPVAEDDL) form a disordered region.

Belongs to the glycosyl hydrolase 9 (cellulase E) family.

The protein localises to the secreted. It carries out the reaction Endohydrolysis of (1-&gt;4)-beta-D-glucosidic linkages in cellulose, lichenin and cereal beta-D-glucans.. The sequence is that of Endoglucanase 5 from Oryza sativa subsp. japonica (Rice).